A 550-amino-acid polypeptide reads, in one-letter code: O-phosphoserine--tRNA(Cys) ligase (550 aa).

Residues 1-32 are disordered; it reads MRFNPQDWKEKSHTNFEGAWHDGPSVITPPGE. Residues 212-214, 257-259, 299-300, and N342 contribute to the substrate site; these read HMT, SAS, and YY.

This sequence belongs to the class-II aminoacyl-tRNA synthetase family. O-phosphoseryl-tRNA(Cys) synthetase subfamily. In terms of assembly, homotetramer. Interacts with SepCysS.

It carries out the reaction tRNA(Cys) + O-phospho-L-serine + ATP = O-phospho-L-seryl-tRNA(Cys) + AMP + diphosphate. Its function is as follows. Catalyzes the attachment of O-phosphoserine (Sep) to tRNA(Cys). In Methanoregula boonei (strain DSM 21154 / JCM 14090 / 6A8), this protein is O-phosphoserine--tRNA(Cys) ligase.